The primary structure comprises 949 residues: Bifunctional uridylyltransferase/uridylyl-removing enzyme (949 aa).

The tract at residues 1–377 (MARHETSFPE…RFRNRVRKIA (377 aa)) is uridylyltransferase. The tract at residues 378 to 733 (GTLDFVDDGG…VRTHDFHAIT (356 aa)) is uridylyl-removing. In terms of domain architecture, HD spans 494-610 (VDEHLLRSVD…VDFAERVQSL (117 aa)). ACT domains follow at residues 734–816 (EITV…VIAS) and 845–926 (VIEV…ERMP). The disordered stretch occupies residues 926 to 949 (PSGIIAPTPVSRVPHGSKTTKAET).

Belongs to the GlnD family. Mg(2+) is required as a cofactor.

It catalyses the reaction [protein-PII]-L-tyrosine + UTP = [protein-PII]-uridylyl-L-tyrosine + diphosphate. The enzyme catalyses [protein-PII]-uridylyl-L-tyrosine + H2O = [protein-PII]-L-tyrosine + UMP + H(+). Its activity is regulated as follows. Uridylyltransferase (UTase) activity is inhibited by glutamine, while glutamine activates uridylyl-removing (UR) activity. Functionally, modifies, by uridylylation and deuridylylation, the PII regulatory proteins (GlnB and homologs), in response to the nitrogen status of the cell that GlnD senses through the glutamine level. Under low glutamine levels, catalyzes the conversion of the PII proteins and UTP to PII-UMP and PPi, while under higher glutamine levels, GlnD hydrolyzes PII-UMP to PII and UMP (deuridylylation). Thus, controls uridylylation state and activity of the PII proteins, and plays an important role in the regulation of nitrogen fixation and metabolism. The sequence is that of Bifunctional uridylyltransferase/uridylyl-removing enzyme from Rhizobium meliloti (strain 1021) (Ensifer meliloti).